Reading from the N-terminus, the 602-residue chain is Gag-Pro polyprotein (602 aa).

Gly2 carries N-myristoyl glycine; by host lipidation. Positions Pro94–Pro97 match the PTAP/PSAP motif motif. Positions Pro94–Ala121 are disordered. Pro residues predominate over residues Pro97–Ala121. The PPXY motif motif lies at Pro124–Tyr127. CCHC-type zinc fingers lie at residues Gln361–Gln378 and Gly384–Gln401. The interval Cys399–Glu425 is disordered. In terms of domain architecture, Peptidase A2 spans Thr473 to Ala551. Residue Asp478 is the Protease; shared with dimeric partner of the active site. Residues Glu582–Pro602 are disordered.

Homodimer; the homodimers are part of the immature particles. Interacts with human TSG101 and NEDD4; these interactions are essential for budding and release of viral particles. In terms of assembly, homodimer; further assembles as homohexamers. In terms of processing, specific enzymatic cleavages by the viral protease yield mature proteins. The polyprotein is cleaved during and after budding, this process is termed maturation. The protease is autoproteolytically processed at its N- and C-termini. Phosphorylation of the matrix protein p19 by MAPK1 seems to play a role in budding. Post-translationally, myristoylated. Myristoylation of the matrix (MA) domain mediates the transport and binding of Gag polyproteins to the host plasma membrane and is required for the assembly of viral particles.

The protein resides in the virion. Functionally, the matrix domain targets Gag, Gag-Pro and Gag-Pro-Pol polyproteins to the plasma membrane via a multipartite membrane binding signal, that includes its myristoylated N-terminus. Matrix protein. In terms of biological role, forms the spherical core of the virus that encapsulates the genomic RNA-nucleocapsid complex. Its function is as follows. Binds strongly to viral nucleic acids and promote their aggregation. Also destabilizes the nucleic acids duplexes via highly structured zinc-binding motifs. Functionally, the aspartyl protease mediates proteolytic cleavages of Gag and Gag-Pol polyproteins during or shortly after the release of the virion from the plasma membrane. Cleavages take place as an ordered, step-wise cascade to yield mature proteins. This process is called maturation. Displays maximal activity during the budding process just prior to particle release from the cell (Potential). Cleaves the translation initiation factor eIF4G leading to the inhibition of host cap-dependent translation. This is Gag-Pro polyprotein (gag-pro) from Homo sapiens (Human).